Here is a 369-residue protein sequence, read N- to C-terminus: Deoxyhypusine synthase (369 aa).

Position 78 is a phosphoserine (Ser78). NAD(+) contacts are provided by residues 105–109 (SNLIS), 131–133 (TAG), Glu137, and Asp238. Spermidine is bound at residue 136–137 (EE). Spermidine is bound at residue Asp243. Residue Gly283 coordinates NAD(+). Residue His288 coordinates spermidine. Position 308-309 (308-309 (TA)) interacts with NAD(+). Spermidine contacts are provided by residues 314–316 (GSD) and 323–329 (EAVSWGK). Lys329 acts as the Nucleophile in catalysis. 342–343 (DA) is a binding site for NAD(+).

Belongs to the deoxyhypusine synthase family. As to quaternary structure, homotetramer formed by a dimer of dimers. NAD(+) is required as a cofactor.

The catalysed reaction is [eIF5A protein]-L-lysine + spermidine = [eIF5A protein]-deoxyhypusine + propane-1,3-diamine. Its pathway is protein modification; eIF5A hypusination. Catalyzes the NAD-dependent oxidative cleavage of spermidine and the subsequent transfer of the butylamine moiety of spermidine to the epsilon-amino group of a critical lysine residue of the eIF-5A precursor protein to form the intermediate deoxyhypusine residue. This is the first step of the post-translational modification of that lysine into an unusual amino acid residue named hypusine. Hypusination is unique to mature eIF-5A factor and is essential for its function. This is Deoxyhypusine synthase (DHPS) from Homo sapiens (Human).